The primary structure comprises 675 residues: MFCKEEEPYEFPENTFGTNELLPNYQQNCTDGEAISDTKSDLAYLEVEITDAHEESNTDKPFTCTECGKTFTRKPNYESHIRAHKGEKPFSCMVCDKAFAWKSNLLVHYSVHSGEKPFSCTECDKTFSNKAQLEKHLRVHTGEKPYSCEQCGKSFAHKCVLDSHQRTHTGDKPFSCTECGKKFSQRGNLHKHLKTHKLDQPHLCAECGKTFSFKSTLLEHQKIHSEIRPLSEFGKTFSDAHNLLKHQSTFTEEQKPFPCTECGEIFSNEHELLTHQSTHTEEQKPFPCTKCWGIFSNEHELRTHQSTHTEGQKSLPSTESGGTFSNEHELLTHQSTHTEEQKHLPCTECGGTFTNEQELLAHQSTHTEEQKPLPCTECGEIFSDEHELLTHQSTHTSPSTEFGVQTTEDNHQSPSKDHTGEKPFSCSECGKSFFYKSVLKDHLVVHTGKKPYHCIECGRSYTHQSSLKSHQRTHTGVKAFSCNLCDKLSIISKLRLHYRVHSGEKPYPCTECDKTFTKKEQLESHYKVHTGEKPYPCQQCGKSFSHKSVLKLHLRTHTGDKPFSCTECGKTFTRKPNYESHLTTHTGKKPFSCTECGKEFAWKRNLEAHYKMHTGEKPFTCTECGKTFTWKSNLRSHYTTVHGISPIQYACTEEDVNVIKTEEGDSFSYMVTLEN.

10 C2H2-type zinc fingers span residues 62-84, 90-112, 118-140, 146-168, 174-196, 202-224, 257-279, 286-308, 344-366, and 373-395; these read FTCT…IRAH, FSCM…YSVH, FSCT…LRVH, YSCE…QRTH, FSCT…LKTH, HLCA…QKIH, FPCT…QSTH, and LPCT…QSTH. The tract at residues 302–325 is disordered; sequence RTHQSTHTEGQKSLPSTESGGTFS. Residues 304–325 are compositionally biased toward polar residues; sequence HQSTHTEGQKSLPSTESGGTFS. A compositionally biased stretch (polar residues) spans 390–407; the sequence is THQSTHTSPSTEFGVQTT. The interval 390–423 is disordered; that stretch reads THQSTHTSPSTEFGVQTTEDNHQSPSKDHTGEKP. The segment covering 408-421 has biased composition (basic and acidic residues); that stretch reads EDNHQSPSKDHTGE. 8 C2H2-type zinc fingers span residues 424–446, 452–474, 480–501, 507–529, 535–557, 563–585, 591–613, and 619–642; these read FSCS…LVVH, YHCI…QRTH, FSCN…YRVH, YPCT…YKVH, YPCQ…LRTH, FSCT…LTTH, FSCT…YKMH, and FTCT…TTVH.

This sequence belongs to the krueppel C2H2-type zinc-finger protein family.

The protein localises to the nucleus. In terms of biological role, may be involved in transcriptional regulation. The chain is Gastrula zinc finger protein xFG20-1 from Xenopus laevis (African clawed frog).